A 144-amino-acid polypeptide reads, in one-letter code: 3-hydroxyacyl-[acyl-carrier-protein] dehydratase FabZ (144 aa).

His49 is a catalytic residue.

The protein belongs to the thioester dehydratase family. FabZ subfamily.

The protein localises to the cytoplasm. It catalyses the reaction a (3R)-hydroxyacyl-[ACP] = a (2E)-enoyl-[ACP] + H2O. In terms of biological role, involved in unsaturated fatty acids biosynthesis. Catalyzes the dehydration of short chain beta-hydroxyacyl-ACPs and long chain saturated and unsaturated beta-hydroxyacyl-ACPs. The chain is 3-hydroxyacyl-[acyl-carrier-protein] dehydratase FabZ from Alkaliphilus oremlandii (strain OhILAs) (Clostridium oremlandii (strain OhILAs)).